The chain runs to 269 residues: Imidazoleglycerol-phosphate dehydratase 3, chloroplastic (269 aa).

The transit peptide at 1–51 (MTTAPVVSPSLSRLHSAPASPFPKAPVGSGAGVAFPARPYGPSLRLRSAVM) directs the protein to the chloroplast. Residues Glu83, 109-117 (HMLDQLASH), 135-139 (HHSNE), Arg161, and Arg183 each bind substrate. Positions 109, 135, 136, and 139 each coordinate Mn(2+). 4 residues coordinate Mn(2+): His207, His231, His232, and Glu235. Substrate contacts are provided by residues 231–239 (HHIIEATFK) and 261–263 (SSK).

It belongs to the imidazoleglycerol-phosphate dehydratase family. Mn(2+) is required as a cofactor.

The protein localises to the plastid. The protein resides in the chloroplast. It catalyses the reaction D-erythro-1-(imidazol-4-yl)glycerol 3-phosphate = 3-(imidazol-4-yl)-2-oxopropyl phosphate + H2O. It participates in amino-acid biosynthesis; L-histidine biosynthesis; L-histidine from 5-phospho-alpha-D-ribose 1-diphosphate: step 6/9. In Triticum aestivum (Wheat), this protein is Imidazoleglycerol-phosphate dehydratase 3, chloroplastic.